A 1192-amino-acid chain; its full sequence is MTEYTNLPVKWTNGIVISDERMMLDPLPSEVSAVLDAPINYSYRYNELRRTHSLKLFGVWSGYIPSHADKHLMIFQLLQQEKELTGDEIRLALRQMQGSIKLPINDKLLDSLDRYSLIFAWIAYAGCLDSAFWQQVCADPKCLVYNPDDNLKFSLMFSLARQYSATTRICSADGLRIPSQISPDLGQLAFDLVFNSSVRQTVWFHANDFPAFDFYTKDVGTMVTFHVNFLYNMTHCVPFKTKQSCAEYLIQKAHEAWSVYCGVLNDTIRHRLRLVEGVGIVTLDVDLQILAAVGWYLPLLVYTIRSVSGSDISEWLNVARREFRDLNCSSMINGEGYVGVPEQFWTIHATSKARMWPRVKKYTCDLTDLYNGDLSSTVLGEGASETGTVKWFDVPLGPKVENFRVVGTRIGALSRANVIYNYEDPSDNCDLARAIGSFVPSLPTSGTRDTNGDLEDAKKMFDYRVSQNVYSICQKGKISSLVSRSVKNLRASLMNGELRVYKGSRLWALRAMLFSDKLRYKSDGQVIDPYESHRGKITVRLNNSSLKMLSAFVTLIELAMAQSSGVEDNMLNGRGLSPLQVRSDREVSRVVIAGAINEPLVGCLRRMYPKLSVIGFGMDAVGENERLTVEGASQRNLACDMLISDIDQTFYSDFTKMCNVTVKHALAFSSWSDYVLMKVNYPSSHLLNEIKQALLSRGFSRIVLPVVMCGQNSFTSEVFVYIGRAGVGGHVDFKNNWFTKNDILMRRYRHMKAPLITIPQVVHSVVSKCVTKHDTELFANPGSIVALTVEYASAREVVSLISEVCSPVWTWRTGAGANKFVNIVGMPSKARAALTRRTDEHYYLKAFERNIVGTSFGMYKGIPRIDALNCVSWVTIFGAAMRECLYWIVDTLKVQYNEVISIGARNMTDIEFIKPSVKLTCYDEYYANPQDLATHYNVNYENKYFNWLSPTLVNDSVYVANFVIMAPTEGSESPSATEQLDRIDSVAGAMAKSSITRMTFVGNLYDSRFLADIALSSLPPEGLKVNDTRTTVQIGKYPPCAAVKPSAFLERMKKYKGVLSYHVYPLGYDRVLKTCADNLWIPDVAGSPMLAFCQGLSYAFYITKPAIPDEGIDQFMLDDMPDDGSGSVTPTQSPSPSPSPSAAANTEASTVVEPIDNLNVVSPTVPGQPSQTPVNPNQSTELQSVAKPGIVR.

The disordered stretch occupies residues Ile-1112–Arg-1192. Residues Pro-1140 to Thr-1150 are compositionally biased toward low complexity. Over residues Asn-1159 to Gln-1183 the composition is skewed to polar residues.

The protein localises to the virion. The catalysed reaction is a 5'-end diphospho-ribonucleoside in mRNA + GTP + H(+) = a 5'-end (5'-triphosphoguanosine)-ribonucleoside in mRNA + diphosphate. It catalyses the reaction a 5'-end (5'-triphosphoguanosine)-ribonucleoside in mRNA + S-adenosyl-L-methionine = a 5'-end (N(7)-methyl 5'-triphosphoguanosine)-ribonucleoside in mRNA + S-adenosyl-L-homocysteine. Functionally, outer capsid protein involved in mRNA capping. Catalyzes the last 3 enzymatic activities for formation of the 5' cap structure on the viral plus-strand transcripts, namely the RNA guanylyltransferase, RNA-7N- and RNA-2'O-methyltransferase activities. This Rice ragged stunt virus (isolate Thailand) (RRSV) protein is Outer capsid protein VP2 (S2).